A 143-amino-acid chain; its full sequence is Large ribosomal subunit protein uL11 (143 aa).

Belongs to the universal ribosomal protein uL11 family. Part of the ribosomal stalk of the 50S ribosomal subunit. Interacts with L10 and the large rRNA to form the base of the stalk. L10 forms an elongated spine to which L12 dimers bind in a sequential fashion forming a multimeric L10(L12)X complex. In terms of processing, one or more lysine residues are methylated.

Functionally, forms part of the ribosomal stalk which helps the ribosome interact with GTP-bound translation factors. The protein is Large ribosomal subunit protein uL11 of Bifidobacterium adolescentis (strain ATCC 15703 / DSM 20083 / NCTC 11814 / E194a).